The primary structure comprises 132 residues: ATP synthase epsilon chain (132 aa).

Belongs to the ATPase epsilon chain family. F-type ATPases have 2 components, CF(1) - the catalytic core - and CF(0) - the membrane proton channel. CF(1) has five subunits: alpha(3), beta(3), gamma(1), delta(1), epsilon(1). CF(0) has three main subunits: a, b and c.

Its subcellular location is the cell membrane. Its function is as follows. Produces ATP from ADP in the presence of a proton gradient across the membrane. The protein is ATP synthase epsilon chain of Desulfitobacterium hafniense (strain Y51).